The chain runs to 227 residues: Type II restriction enzyme ScaI (227 aa).

The interval 12–35 (EARVGTRTGGPAMRPKTSDSPYFG) is disordered.

It carries out the reaction Endonucleolytic cleavage of DNA to give specific double-stranded fragments with terminal 5'-phosphates.. Its function is as follows. A P subtype restriction enzyme that recognizes the double-stranded sequence 5'-AGTACT-3' and cleaves after T-3. The protein is Type II restriction enzyme ScaI of Streptomyces caespitosus.